Reading from the N-terminus, the 267-residue chain is Small ribosomal subunit protein uS3 (267 aa).

The 69-residue stretch at 43 to 111 (IRKEMSKDLE…QVQLNIFEVK (69 aa)) folds into the KH type-2 domain. A disordered region spans residues 216–267 (FEEQQAQQNNRPGRRGGDRRPRRGNRSAAPQAAEAPKAEAPAEAAPAAETKE). Residues 241–267 (RSAAPQAAEAPKAEAPAEAAPAAETKE) are compositionally biased toward low complexity.

This sequence belongs to the universal ribosomal protein uS3 family. Part of the 30S ribosomal subunit. Forms a tight complex with proteins S10 and S14.

Its function is as follows. Binds the lower part of the 30S subunit head. Binds mRNA in the 70S ribosome, positioning it for translation. The chain is Small ribosomal subunit protein uS3 from Bifidobacterium longum (strain DJO10A).